A 103-amino-acid polypeptide reads, in one-letter code: Small ribosomal subunit protein uS10 (103 aa).

Belongs to the universal ribosomal protein uS10 family. As to quaternary structure, part of the 30S ribosomal subunit.

Its function is as follows. Involved in the binding of tRNA to the ribosomes. In Azotobacter vinelandii (strain DJ / ATCC BAA-1303), this protein is Small ribosomal subunit protein uS10.